We begin with the raw amino-acid sequence, 55 residues long: Large ribosomal subunit protein bL33 (55 aa).

This sequence belongs to the bacterial ribosomal protein bL33 family.

This chain is Large ribosomal subunit protein bL33, found in Methylobacterium sp. (strain 4-46).